A 1031-amino-acid chain; its full sequence is Formin-binding protein 4 (1031 aa).

Disordered regions lie at residues 1–102 (MMGK…TTRP), 116–143 (AYADSDDDESDVSEKTAQSKEANGNQAT), and 166–205 (APVVASAPPPTPPRPEPKEAATPALSPTASNGSDTAQTPG). Residue serine 19 is modified to Phosphoserine. Low complexity-rich tracts occupy residues 41 to 73 (DSTAAATSQSAPAAATAAAATSPAVPASAAPED) and 83 to 92 (VVEVPNVVQN). Serine 120, serine 125, and serine 128 each carry phosphoserine. Residues 134–143 (SKEANGNQAT) are compositionally biased toward polar residues. A Phosphothreonine modification is found at threonine 176. Positions 190-203 (LSPTASNGSDTAQT) are enriched in polar residues. The region spanning 218-252 (EIEMGDWQEVWDENTGCYYYWNTQTNEVTWELPQY) is the WW 1 domain. The residue at position 294 (lysine 294) is an N6-acetyllysine. A Glycyl lysine isopeptide (Lys-Gly) (interchain with G-Cter in SUMO1) cross-link involves residue lysine 305. A Glycyl lysine isopeptide (Lys-Gly) (interchain with G-Cter in SUMO2) cross-link involves residue lysine 339. A Glycyl lysine isopeptide (Lys-Gly) (interchain with G-Cter in SUMO1); alternate cross-link involves residue lysine 352. Residue lysine 352 forms a Glycyl lysine isopeptide (Lys-Gly) (interchain with G-Cter in SUMO2); alternate linkage. The interval 355 to 518 (DPVSETKETS…KETEVEESSE (164 aa)) is disordered. The segment covering 400–414 (ESEEEEEEEEQDTLE) has biased composition (acidic residues). Positions 418–430 (ALERKKAELRALE) are enriched in basic and acidic residues. Residues serine 435, serine 440, serine 443, serine 446, and serine 450 each carry the phosphoserine modification. Positions 436–450 (VSGSSPRSDISQPAS) are enriched in polar residues. Basic residues predominate over residues 457 to 466 (IMSKRGKWKM). The segment covering 469 to 482 (RATSPESTSRSSSK) has biased composition (low complexity). Residues serine 472, serine 507, and serine 516 each carry the phosphoserine modification. Residues 499-518 (DSEKIDEISDKETEVEESSE) show a composition bias toward basic and acidic residues. A Glycyl lysine isopeptide (Lys-Gly) (interchain with G-Cter in SUMO1); alternate cross-link involves residue lysine 527. A Glycyl lysine isopeptide (Lys-Gly) (interchain with G-Cter in SUMO2); alternate cross-link involves residue lysine 527. Residues 603–637 (NATPKGWSCHWDRDHRRYFYVNEQSGESQWEFPDG) form the WW 2 domain. Disordered stretches follow at residues 629 to 681 (ESQW…SLCK), 712 to 813 (PLPL…VQRS), and 900 to 994 (PAQA…RIEE). Residues 643 to 663 (SQTKEVRDESLPKLTVKDKTC) show a composition bias toward basic and acidic residues. Residues 664-677 (TDPNSTESSENPTG) are compositionally biased toward polar residues. The segment covering 712 to 741 (PLPLEMPPPPPPPPESPPPPPPPPPPPPPL) has biased composition (pro residues). Positions 742–757 (EDGEIQEVEMEDEGSE) are enriched in acidic residues. The span at 771 to 794 (KPSTQTTAVTSQSLVDSTASSPPS) shows a compositional bias: polar residues. Residues 913 to 939 (VEPPPPPPPPPTPTPPPPPPAPKVPPP) are compositionally biased toward pro residues. Residues 943-955 (RKGKKDKAKKSKT) show a composition bias toward basic residues. The span at 971 to 984 (LDEEDNSSSSEEDR) shows a compositional bias: acidic residues. 3 positions are modified to phosphoserine: serine 977, serine 978, and serine 979. The segment covering 985 to 994 (ESTAQKRIEE) has biased composition (basic and acidic residues).

Binds FMN1. Interacts with the Arg/Gly-rich-flanked Pro-rich regions of KHDRBS1/SAM68. Arginine methylation in these regions has no effect on this binding. In terms of tissue distribution, ubiquitous. Highest levels in spleen and thymus.

This Mus musculus (Mouse) protein is Formin-binding protein 4 (Fnbp4).